The sequence spans 225 residues: ATP-dependent dethiobiotin synthetase BioD (225 aa).

12–17 contacts ATP; the sequence is EVGKTY. Thr-16 is a binding site for Mg(2+). The active site involves Lys-37. Ser-41 is a substrate binding site. Residues Asp-52, 114–117, and 174–175 contribute to the ATP site; these read EGAG and NC. Mg(2+) contacts are provided by Asp-52 and Glu-114.

Belongs to the dethiobiotin synthetase family. As to quaternary structure, homodimer. Mg(2+) serves as cofactor.

The protein resides in the cytoplasm. It carries out the reaction (7R,8S)-7,8-diammoniononanoate + CO2 + ATP = (4R,5S)-dethiobiotin + ADP + phosphate + 3 H(+). It participates in cofactor biosynthesis; biotin biosynthesis; biotin from 7,8-diaminononanoate: step 1/2. In terms of biological role, catalyzes a mechanistically unusual reaction, the ATP-dependent insertion of CO2 between the N7 and N8 nitrogen atoms of 7,8-diaminopelargonic acid (DAPA, also called 7,8-diammoniononanoate) to form a ureido ring. This chain is ATP-dependent dethiobiotin synthetase BioD, found in Francisella tularensis subsp. novicida (strain U112).